Here is a 1422-residue protein sequence, read N- to C-terminus: Guanine nucleotide exchange factor subunit RIC1 (1422 aa).

WD repeat units follow at residues 64 to 103 (TQFG…GDKY) and 304 to 343 (NKTG…LICT). 2 disordered regions span residues 442–462 (NPKY…SPFA) and 986–1005 (SGES…SSSG). Basic and acidic residues predominate over residues 449–460 (RAERMPRHEKSP). Thr991 and Thr995 each carry phosphothreonine. Phosphoserine is present on residues Ser1014, Ser1016, Ser1018, Ser1036, and Ser1171. The segment at 1021-1048 (AENVPPGKFGLQKTLSMPTGPSGKRWSK) is disordered. 2 disordered regions span residues 1179 to 1198 (THRD…DAFL) and 1355 to 1422 (DTFQ…CSVS). Residues 1378–1396 (GSCSHGSISQSEPGSNNVV) are compositionally biased toward polar residues. The span at 1403–1412 (TTQADEEEPL) shows a compositional bias: acidic residues.

This sequence belongs to the RIC1 family. Forms a complex with RGP1; the interaction enhances RAB6A GTPase activity. Interacts (via central domain) with RGP1. Interacts with RAB6A; the interaction is direct with a preference for RAB6A-GDP. Interacts (via C-terminus domain) with RAB33B; the interaction is direct with a preference for RAB33B-GTP. Interacts with GJA1. Expressed in the eye lens.

It localises to the cytoplasm. Its subcellular location is the cytosol. The protein localises to the membrane. Functionally, the RIC1-RGP1 complex acts as a guanine nucleotide exchange factor (GEF), which activates RAB6A by exchanging bound GDP for free GTP, and may thereby be required for efficient fusion of endosome-derived vesicles with the Golgi compartment. The RIC1-RGP1 complex participates in the recycling of mannose-6-phosphate receptors. Required for phosphorylation and localization of GJA1. Is a regulator of procollagen transport and secretion, and is required for correct cartilage morphogenesis and development of the craniofacial skeleton. In Mus musculus (Mouse), this protein is Guanine nucleotide exchange factor subunit RIC1.